We begin with the raw amino-acid sequence, 1236 residues long: Complement factor H (1236 aa).

The first 18 residues, 1–18 (MRFPAKIVWLVLWTVCVA), serve as a signal peptide directing secretion. Sushi domains lie at 19 to 82 (EDCK…ICRK), 83 to 143 (KPCA…ICEV), 144 to 207 (VKCL…KCVE), 208 to 264 (IFCK…TCIE), 265 to 322 (ITCD…RCAW), 325 to 383 (CSYP…EEPC), 385 to 442 (RQCI…RCIR), 444 to 505 (KTCS…VCIK), 507 to 562 (CDRP…KAAC), 565 to 623 (RECS…TCKV), 627 to 685 (KSCA…VCIE), 688 to 745 (RTCG…QCIA), 750 to 804 (RKCK…DCNE), 809 to 866 (QLCP…RCIE), 868 to 936 (IGCS…QCVG), 937 to 994 (LPCG…DCIS), 995 to 1053 (TNCV…ACRD), 1054 to 1111 (VSCG…QCKD), 1114 to 1172 (GKCG…KCLE), and 1173 to 1235 (ACVI…YPRC). Intrachain disulfides connect C21–C66, C52–C80, C85–C129, C114–C141, C146–C192, C178–C205, C210–C251, C237–C262, C267–C309, C294–C320, C325–C372, C355–C383, C387–C429, C414–C440, C446–C492, C475–C503, C507–C551, C534–C562, C567–C609, C595–C621, C629–C672, C658–C683, C690–C732, C718–C743, C752–C791, C780–C802, C811–C853, C839–C864, C870–C923, C909–C934, C939–C981, C967–C992, C997–C1040, C1026–C1051, C1056–C1098, C1084–C1109, C1116–C1159, C1145–C1170, C1174–C1225, and C1208–C1235. Sulfotyrosine occurs at positions 168 and 170. Sulfotyrosine occurs at positions 465 and 473. A sulfotyrosine mark is found at Y575, Y579, and Y585. N775 carries an N-linked (GlcNAc...) asparagine glycan. N1100 carries N-linked (GlcNAc...) asparagine glycosylation.

In terms of assembly, homodimer. Also forms homooligomers. Interacts with complement protein C3b; this interaction inhibits complement activation. Interacts with complement protein C3d. Interacts with CR3/ITGAM; this interaction mediates adhesion of neutrophils to pathogens leading to pathogen clearance. Sulfated on tyrosine residues. CFH is one of the most abundant complement components in blood where the liver is the major source of CFH protein in vivo. in addition, CFH is secreted by additional cell types including monocytes, fibroblasts, or endothelial cells.

The protein localises to the secreted. Functionally, glycoprotein that plays an essential role in maintaining a well-balanced immune response by modulating complement activation. Acts as a soluble inhibitor of complement, where its binding to self markers such as glycan structures prevents complement activation and amplification on cell surfaces. Accelerates the decay of the complement alternative pathway (AP) C3 convertase C3bBb, thus preventing local formation of more C3b, the central player of the complement amplification loop. As a cofactor of the serine protease factor I, CFH also regulates proteolytic degradation of already-deposited C3b. In addition, mediates several cellular responses through interaction with specific receptors. For example, interacts with CR3/ITGAM receptor and thereby mediates the adhesion of human neutrophils to different pathogens. In turn, these pathogens are phagocytosed and destroyed. This Bos taurus (Bovine) protein is Complement factor H (CFH).